Consider the following 1020-residue polypeptide: Probable beta-galactosidase B (1020 aa).

A signal peptide spans 1 to 22 (MLISKTVLSGLALGASFVGVSA). A glycan (N-linked (GlcNAc...) asparagine) is linked at Asn25. Substrate is bound at residue Tyr90. Residue Asn111 is glycosylated (N-linked (GlcNAc...) asparagine). Residues Asn135, Ala136, and Glu137 each contribute to the substrate site. N-linked (GlcNAc...) asparagine glycosylation occurs at Asn172. Asn195 is a binding site for substrate. Catalysis depends on Glu196, which acts as the Proton donor. N-linked (GlcNAc...) asparagine glycans are attached at residues Asn210 and Asn251. Residue Tyr264 coordinates substrate. Cys270 and Cys323 form a disulfide bridge. An N-linked (GlcNAc...) asparagine glycan is attached at Asn271. Glu307 acts as the Nucleophile in catalysis. Tyr372 is a substrate binding site. Residues Asn410, Asn455, Asn549, Asn596, Asn625, Asn702, Asn747, Asn785, Asn819, Asn880, and Asn919 are each glycosylated (N-linked (GlcNAc...) asparagine).

This sequence belongs to the glycosyl hydrolase 35 family.

It is found in the secreted. The catalysed reaction is Hydrolysis of terminal non-reducing beta-D-galactose residues in beta-D-galactosides.. In terms of biological role, cleaves beta-linked terminal galactosyl residues from gangliosides, glycoproteins, and glycosaminoglycans. The chain is Probable beta-galactosidase B (lacB) from Aspergillus flavus (strain ATCC 200026 / FGSC A1120 / IAM 13836 / NRRL 3357 / JCM 12722 / SRRC 167).